Reading from the N-terminus, the 476-residue chain is Aspartyl/glutamyl-tRNA(Asn/Gln) amidotransferase subunit B (476 aa).

Belongs to the GatB/GatE family. GatB subfamily. As to quaternary structure, heterotrimer of A, B and C subunits.

The enzyme catalyses L-glutamyl-tRNA(Gln) + L-glutamine + ATP + H2O = L-glutaminyl-tRNA(Gln) + L-glutamate + ADP + phosphate + H(+). The catalysed reaction is L-aspartyl-tRNA(Asn) + L-glutamine + ATP + H2O = L-asparaginyl-tRNA(Asn) + L-glutamate + ADP + phosphate + 2 H(+). Allows the formation of correctly charged Asn-tRNA(Asn) or Gln-tRNA(Gln) through the transamidation of misacylated Asp-tRNA(Asn) or Glu-tRNA(Gln) in organisms which lack either or both of asparaginyl-tRNA or glutaminyl-tRNA synthetases. The reaction takes place in the presence of glutamine and ATP through an activated phospho-Asp-tRNA(Asn) or phospho-Glu-tRNA(Gln). This Solidesulfovibrio magneticus (strain ATCC 700980 / DSM 13731 / RS-1) (Desulfovibrio magneticus) protein is Aspartyl/glutamyl-tRNA(Asn/Gln) amidotransferase subunit B.